The sequence spans 32 residues: Parigidin-br1 (32 aa).

Residues glycine 1–aspartate 32 constitute a cross-link (cyclopeptide (Gly-Asp)). Cystine bridges form between cysteine 6–cysteine 22, cysteine 10–cysteine 24, and cysteine 15–cysteine 29.

This is a cyclic peptide. Expressed in leaves, flowers, peduncles and seeds (at protein level).

Probably participates in a plant defense mechanism. Reduces growth of and increases mortality in larvae of D.saccharalis. Kills cultured SF-9 cells of S.frugiperda probably by disrupting plasma membranes. Has hemolytic activity against human erythrocytes. Has no antibacterial activity against E.coli strain ATCC 8739 and S.aureus strain ATCC 25923. This chain is Parigidin-br1, found in Palicourea rigida.